The chain runs to 147 residues: Large ribosomal subunit protein uL13 (147 aa).

This sequence belongs to the universal ribosomal protein uL13 family. In terms of assembly, part of the 50S ribosomal subunit.

Functionally, this protein is one of the early assembly proteins of the 50S ribosomal subunit, although it is not seen to bind rRNA by itself. It is important during the early stages of 50S assembly. The polypeptide is Large ribosomal subunit protein uL13 (Deinococcus geothermalis (strain DSM 11300 / CIP 105573 / AG-3a)).